The primary structure comprises 309 residues: Nucleotide-binding protein cgR_1639 (309 aa).

G32–S39 serves as a coordination point for ATP. D83 to S86 lines the GTP pocket.

The protein belongs to the RapZ-like family.

Functionally, displays ATPase and GTPase activities. This Corynebacterium glutamicum (strain R) protein is Nucleotide-binding protein cgR_1639.